The primary structure comprises 155 residues: uncharacterized protein (155 aa).

4 helical membrane passes run 2-24 (TFLF…PPIF), 62-84 (AVVN…YLVL), 97-116 (VFLI…FLVV), and 131-148 (VVLL…KVFN).

It localises to the cell membrane. This is an uncharacterized protein from Aquifex aeolicus (strain VF5).